Here is a 1342-residue protein sequence, read N- to C-terminus: DNA-directed RNA polymerase subunit beta (1342 aa).

Lysine 1022 and lysine 1200 each carry N6-acetyllysine.

This sequence belongs to the RNA polymerase beta chain family. The RNAP catalytic core consists of 2 alpha, 1 beta, 1 beta' and 1 omega subunit. When a sigma factor is associated with the core the holoenzyme is formed, which can initiate transcription.

The enzyme catalyses RNA(n) + a ribonucleoside 5'-triphosphate = RNA(n+1) + diphosphate. DNA-dependent RNA polymerase catalyzes the transcription of DNA into RNA using the four ribonucleoside triphosphates as substrates. This is DNA-directed RNA polymerase subunit beta from Shigella dysenteriae serotype 1 (strain Sd197).